Consider the following 152-residue polypeptide: SsrA-binding protein (152 aa).

Belongs to the SmpB family.

It is found in the cytoplasm. Required for rescue of stalled ribosomes mediated by trans-translation. Binds to transfer-messenger RNA (tmRNA), required for stable association of tmRNA with ribosomes. tmRNA and SmpB together mimic tRNA shape, replacing the anticodon stem-loop with SmpB. tmRNA is encoded by the ssrA gene; the 2 termini fold to resemble tRNA(Ala) and it encodes a 'tag peptide', a short internal open reading frame. During trans-translation Ala-aminoacylated tmRNA acts like a tRNA, entering the A-site of stalled ribosomes, displacing the stalled mRNA. The ribosome then switches to translate the ORF on the tmRNA; the nascent peptide is terminated with the 'tag peptide' encoded by the tmRNA and targeted for degradation. The ribosome is freed to recommence translation, which seems to be the essential function of trans-translation. This chain is SsrA-binding protein, found in Rickettsia prowazekii (strain Madrid E).